The sequence spans 54 residues: uncharacterized protein (54 aa).

The tract at residues 1–38 (MFPNSNGPNKMKALVAPSNSSTTSKTNNNNLPPNGRSS) is disordered. The span at 17-38 (PSNSSTTSKTNNNNLPPNGRSS) shows a compositional bias: low complexity.

This is an uncharacterized protein from Dictyostelium discoideum (Social amoeba).